The sequence spans 492 residues: MDPYKHRPTSGANSAYWTTNSGAPVWNNNNALTVGHRGPILLEDYHLIEKLAQFDRERIPERVVHARGASAKGFFEVTHDVSQLTCADFLRAPGVQTPVIVRFSTVVHERGSPETLRDPRGFAVKFYTREGNFDLVGNNMPVFFIRDGMKFPDMVHAFKPSSKTNMQENWRVVDFFSHHPESLHMFTFLFDDVGIPLNYRHMDGFGVNTYTLISRDGKAHLVKFHWKPTCGVKCLLDDEAVTVGGTCHTHATKDLTDSIAAGNYPEWKLFIQTIDADHEDRFDFDPLDVTKTWPEDIIPLQPVGRMVLNKNIDNFFAENEQLAFCPAVTVPGIHYSDDKLLQTRIFSYADTQRHRLGPNYLMLPVNAPKCAHHNNHHDGLMNFIHRDEEVNYFPSRVDPTRHAEKDPMPPRVLSGCREKCIIDKENNFKQAGERYRSFDPARQDRFLQRWVDALTDARVTHEIQSIWVSYWSQCDASLGQKLASRLKIKPNM.

Residues His65 and Asn138 contribute to the active site. Heme is bound at residue Tyr348.

Belongs to the catalase family. Homotetramer. Heme is required as a cofactor.

It localises to the cytoplasm. Its subcellular location is the cytosol. It is found in the peroxisome matrix. The enzyme catalyses 2 H2O2 = O2 + 2 H2O. Catalyzes the degradation of hydrogen peroxide (H(2)O(2)) generated by peroxisomal oxidases to water and oxygen, thereby protecting cells from the toxic effects of hydrogen peroxide. This chain is Catalase (CATA), found in Triticum aestivum (Wheat).